A 153-amino-acid polypeptide reads, in one-letter code: Pheromone-binding protein Gp-9 (153 aa).

The signal sequence occupies residues 1-19; the sequence is MKTFVLHIFIFAFVAFASA. Cystine bridges form between Cys-37–Cys-77, Cys-73–Cys-129, and Cys-118–Cys-138.

It belongs to the PBP/GOBP family. As to quaternary structure, homodimer.

It is found in the secreted. In terms of biological role, colony queen number, a major feature of social organization, is associated with worker genotype for Gp-9. Colonies are headed by either a single reproductive queen (monogyne form) or multiple queens (polygyne form). Differences in worker Gp-9 genotypes between social forms may cause differences in workers' abilities to recognize queens and regulate their numbers. The sequence is that of Pheromone-binding protein Gp-9 from Solenopsis amblychila (Desert fire ant).